Reading from the N-terminus, the 220-residue chain is Pyridoxine/pyridoxamine 5'-phosphate oxidase (220 aa).

Residues 13–16 (RVEY) and Lys77 contribute to the substrate site. FMN-binding positions include 72–77 (RTVLCK), 87–88 (FT), Lys94, and Gln116. Substrate-binding residues include Tyr134, Arg138, and Ser142. Residues 151-152 (QS) and Trp197 contribute to the FMN site. A substrate-binding site is contributed by 203–205 (RLH). Residue Arg207 coordinates FMN.

Belongs to the pyridoxamine 5'-phosphate oxidase family. As to quaternary structure, homodimer. It depends on FMN as a cofactor.

It catalyses the reaction pyridoxamine 5'-phosphate + O2 + H2O = pyridoxal 5'-phosphate + H2O2 + NH4(+). It carries out the reaction pyridoxine 5'-phosphate + O2 = pyridoxal 5'-phosphate + H2O2. Its pathway is cofactor metabolism; pyridoxal 5'-phosphate salvage; pyridoxal 5'-phosphate from pyridoxamine 5'-phosphate: step 1/1. The protein operates within cofactor metabolism; pyridoxal 5'-phosphate salvage; pyridoxal 5'-phosphate from pyridoxine 5'-phosphate: step 1/1. Catalyzes the oxidation of either pyridoxine 5'-phosphate (PNP) or pyridoxamine 5'-phosphate (PMP) into pyridoxal 5'-phosphate (PLP). The polypeptide is Pyridoxine/pyridoxamine 5'-phosphate oxidase (Mycolicibacterium paratuberculosis (strain ATCC BAA-968 / K-10) (Mycobacterium paratuberculosis)).